Reading from the N-terminus, the 137-residue chain is Dormancy-associated protein homolog 3 (137 aa).

2 disordered regions span residues Met1–Pro55 and Lys69–Met137. Positions Phe32–Ala43 are enriched in polar residues. Positions Pro70–Pro87 are enriched in low complexity. Ser81 carries the post-translational modification Phosphoserine. Residues Pro88–Ser97 show a composition bias toward pro residues. Residues Glu104 to Glu118 are compositionally biased toward basic and acidic residues. Polar residues predominate over residues Gly127 to Met137.

This sequence belongs to the DRM1/ARP family.

The chain is Dormancy-associated protein homolog 3 from Arabidopsis thaliana (Mouse-ear cress).